Consider the following 130-residue polypeptide: Anti-adapter protein IraD (130 aa).

This sequence belongs to the GpW/Gp25 family. IraD subfamily. Interacts with RssB.

The protein localises to the cytoplasm. Its function is as follows. Inhibits RpoS proteolysis by regulating RssB activity, thereby increasing the stability of the sigma stress factor RpoS during oxidative stress. Its effect on RpoS stability is due to its interaction with RssB, which probably blocks the interaction of RssB with RpoS, and the consequent delivery of the RssB-RpoS complex to the ClpXP protein degradation pathway. This is Anti-adapter protein IraD from Escherichia coli O9:H4 (strain HS).